Here is a 179-residue protein sequence, read N- to C-terminus: uncharacterized protein (179 aa).

Its subcellular location is the virion. This is an uncharacterized protein from Acanthamoeba polyphaga (Amoeba).